A 272-amino-acid polypeptide reads, in one-letter code: Tryptophan synthase alpha chain (272 aa).

Active-site proton acceptor residues include glutamate 49 and glutamate 60.

It belongs to the TrpA family. Tetramer of two alpha and two beta chains.

The catalysed reaction is (1S,2R)-1-C-(indol-3-yl)glycerol 3-phosphate + L-serine = D-glyceraldehyde 3-phosphate + L-tryptophan + H2O. It participates in amino-acid biosynthesis; L-tryptophan biosynthesis; L-tryptophan from chorismate: step 5/5. Functionally, the alpha subunit is responsible for the aldol cleavage of indoleglycerol phosphate to indole and glyceraldehyde 3-phosphate. The chain is Tryptophan synthase alpha chain from Legionella pneumophila (strain Lens).